We begin with the raw amino-acid sequence, 672 residues long: Probable urocanate hydratase (672 aa).

NAD(+) is bound by residues 128 to 129, Gln-206, 253 to 255, Glu-273, 318 to 319, 340 to 344, 351 to 352, Tyr-400, and Gly-592; these read GG, GMS, NV, QTSLH, and YY.

The protein belongs to the urocanase family. Requires NAD(+) as cofactor.

It catalyses the reaction 4-imidazolone-5-propanoate = trans-urocanate + H2O. Its pathway is amino-acid degradation; L-histidine degradation into L-glutamate; N-formimidoyl-L-glutamate from L-histidine: step 2/3. The protein is Probable urocanate hydratase (uroc1) of Dictyostelium discoideum (Social amoeba).